Consider the following 614-residue polypeptide: DNA mismatch repair protein MutL (614 aa).

Positions 355 to 411 (PLSTGRVSEADPSNYATQSKFDEKPRESGSQGQSSSISAPSSYSRGGEYSARSQPEL) are disordered. Positions 382–401 (SGSQGQSSSISAPSSYSRGG) are enriched in low complexity.

This sequence belongs to the DNA mismatch repair MutL/HexB family.

In terms of biological role, this protein is involved in the repair of mismatches in DNA. It is required for dam-dependent methyl-directed DNA mismatch repair. May act as a 'molecular matchmaker', a protein that promotes the formation of a stable complex between two or more DNA-binding proteins in an ATP-dependent manner without itself being part of a final effector complex. This Shewanella woodyi (strain ATCC 51908 / MS32) protein is DNA mismatch repair protein MutL.